We begin with the raw amino-acid sequence, 187 residues long: MKNCMMADQRGRSILQYQPIVGDEALEFSRGLAPSTFGFRYAAYMDRNHFLPSGRTAVKHIADPTLAYVMTRYRQCHDFVHIITGCGRSIEEELAVKIFEWKHTGLPLGLLSLLGGAPRLSAAQWAHIRLYWEWASRNAPSSRHGEPAVPMYLNVPWEDMLAKEYDEVVAYTGITPLPDFLEKRQKH.

Zn(2+) contacts are provided by His77, Asp78, His81, and Glu93.

The protein belongs to the COQ4 family. In terms of assembly, component of a multi-subunit COQ enzyme complex. Requires Zn(2+) as cofactor.

It localises to the mitochondrion inner membrane. The catalysed reaction is a 4-hydroxy-3-methoxy-5-(all-trans-polyprenyl)benzoate + H(+) = a 2-methoxy-6-(all-trans-polyprenyl)phenol + CO2. Its pathway is cofactor biosynthesis; ubiquinone biosynthesis. In terms of biological role, lyase that catalyzes the C1-decarboxylation of 4-hydroxy-3-methoxy-5-(all-trans-polyprenyl)benzoic acid into 2-methoxy-6-(all-trans-polyprenyl)phenol during ubiquinone biosynthesis. This is Ubiquinone biosynthesis protein COQ4 homolog, mitochondrial from Leishmania major.